Reading from the N-terminus, the 268-residue chain is MIQKLLARDFFNNKEQPIILEPRAPQEIFPEHTHDFDELVIVKHGSGRHILNGYPHDLYPGVVLYIQAQDHHSYENLQDLCLTNILIQSNNNFKYLNNIDILLNGLKPENSSYQLINKKTAEYIDSLLEKINAIDESYNLQNECLFFQVLSSIQAHQFNDSGYGNTEEKGRQMIRWLENNFEKEIDWEELAEKFALPIRTLHRYIKSQTGHTPQNYVTKLRLAQAYYQLKYTEKNIINIAYDCGFNDSSYFSTCFKNEYSIAPRELRI.

Positions 171 to 268 constitute an HTH araC/xylS-type domain; the sequence is RQMIRWLENN…YSIAPRELRI (98 aa). 2 consecutive DNA-binding regions (H-T-H motif) follow at residues 188–209 and 236–259; these read EELA…KSQT and IINI…KNEY.

In terms of assembly, binds DNA as a dimer.

It localises to the cytoplasm. Functionally, activates expression of the rhaBAD and rhaT operons. In Mannheimia succiniciproducens (strain KCTC 0769BP / MBEL55E), this protein is HTH-type transcriptional activator RhaS.